Reading from the N-terminus, the 317-residue chain is tRNA-dihydrouridine(20a/20b) synthase [NAD(P)+]-like (317 aa).

Residues 33–35 and Gln-87 each bind FMN; that span reads PMV. Residue Cys-116 is the Proton donor of the active site. Residues Lys-158, His-186, 216 to 218, and 240 to 241 each bind FMN; these read NGD and AR.

It belongs to the Dus family. Dus4 subfamily. Requires FMN as cofactor.

It catalyses the reaction 5,6-dihydrouridine(20a) in tRNA + NADP(+) = uridine(20a) in tRNA + NADPH + H(+). The catalysed reaction is 5,6-dihydrouridine(20a) in tRNA + NAD(+) = uridine(20a) in tRNA + NADH + H(+). It carries out the reaction 5,6-dihydrouridine(20b) in tRNA + NAD(+) = uridine(20b) in tRNA + NADH + H(+). The enzyme catalyses 5,6-dihydrouridine(20b) in tRNA + NADP(+) = uridine(20b) in tRNA + NADPH + H(+). Its function is as follows. Catalyzes the synthesis of dihydrouridine, a modified base found in the D-loop of most tRNAs. The polypeptide is tRNA-dihydrouridine(20a/20b) synthase [NAD(P)+]-like (DUS4L) (Homo sapiens (Human)).